Consider the following 523-residue polypeptide: GMP synthase [glutamine-hydrolyzing] (523 aa).

The region spanning 8–205 is the Glutamine amidotransferase type-1 domain; sequence KILILDFGSQ…VVNICGCETK (198 aa). Residue Cys85 is the Nucleophile of the active site. Active-site residues include His179 and Glu181. A GMPS ATP-PPase domain is found at 206 to 398; the sequence is WTAENIIEDA…LGLPAEMLNR (193 aa). Position 233 to 239 (233 to 239) interacts with ATP; that stretch reads SGGVDSS.

Homodimer.

It carries out the reaction XMP + L-glutamine + ATP + H2O = GMP + L-glutamate + AMP + diphosphate + 2 H(+). Its pathway is purine metabolism; GMP biosynthesis; GMP from XMP (L-Gln route): step 1/1. Functionally, catalyzes the synthesis of GMP from XMP. The polypeptide is GMP synthase [glutamine-hydrolyzing] (Glaesserella parasuis serovar 5 (strain SH0165) (Haemophilus parasuis)).